A 223-amino-acid polypeptide reads, in one-letter code: 7-cyano-7-deazaguanine synthase (223 aa).

Leu8–Leu18 serves as a coordination point for ATP. Residues Cys187, Cys197, Cys200, and Cys203 each contribute to the Zn(2+) site.

Belongs to the QueC family. Zn(2+) serves as cofactor.

The enzyme catalyses 7-carboxy-7-deazaguanine + NH4(+) + ATP = 7-cyano-7-deazaguanine + ADP + phosphate + H2O + H(+). It participates in purine metabolism; 7-cyano-7-deazaguanine biosynthesis. Catalyzes the ATP-dependent conversion of 7-carboxy-7-deazaguanine (CDG) to 7-cyano-7-deazaguanine (preQ(0)). The sequence is that of 7-cyano-7-deazaguanine synthase from Methylococcus capsulatus (strain ATCC 33009 / NCIMB 11132 / Bath).